Here is a 269-residue protein sequence, read N- to C-terminus: 4-hydroxy-tetrahydrodipicolinate reductase (269 aa).

NAD(+) contacts are provided by residues Gly-11 to Met-16 and Glu-37. NADP(+) is bound at residue Arg-38. Residues Gly-101–Thr-103 and Ala-125–Met-128 contribute to the NAD(+) site. Residue His-158 is the Proton donor/acceptor of the active site. His-159 contributes to the (S)-2,3,4,5-tetrahydrodipicolinate binding site. The active-site Proton donor is the Lys-162. Gly-168–Thr-169 is a (S)-2,3,4,5-tetrahydrodipicolinate binding site.

It belongs to the DapB family.

It localises to the cytoplasm. The enzyme catalyses (S)-2,3,4,5-tetrahydrodipicolinate + NAD(+) + H2O = (2S,4S)-4-hydroxy-2,3,4,5-tetrahydrodipicolinate + NADH + H(+). The catalysed reaction is (S)-2,3,4,5-tetrahydrodipicolinate + NADP(+) + H2O = (2S,4S)-4-hydroxy-2,3,4,5-tetrahydrodipicolinate + NADPH + H(+). It functions in the pathway amino-acid biosynthesis; L-lysine biosynthesis via DAP pathway; (S)-tetrahydrodipicolinate from L-aspartate: step 4/4. Its function is as follows. Catalyzes the conversion of 4-hydroxy-tetrahydrodipicolinate (HTPA) to tetrahydrodipicolinate. This Ruegeria pomeroyi (strain ATCC 700808 / DSM 15171 / DSS-3) (Silicibacter pomeroyi) protein is 4-hydroxy-tetrahydrodipicolinate reductase.